Consider the following 490-residue polypeptide: Glutamyl-tRNA(Gln) amidotransferase subunit A (490 aa).

Catalysis depends on charge relay system residues lysine 77 and serine 152. Residue serine 176 is the Acyl-ester intermediate of the active site.

It belongs to the amidase family. GatA subfamily. As to quaternary structure, heterotrimer of A, B and C subunits.

The enzyme catalyses L-glutamyl-tRNA(Gln) + L-glutamine + ATP + H2O = L-glutaminyl-tRNA(Gln) + L-glutamate + ADP + phosphate + H(+). Its function is as follows. Allows the formation of correctly charged Gln-tRNA(Gln) through the transamidation of misacylated Glu-tRNA(Gln) in organisms which lack glutaminyl-tRNA synthetase. The reaction takes place in the presence of glutamine and ATP through an activated gamma-phospho-Glu-tRNA(Gln). The protein is Glutamyl-tRNA(Gln) amidotransferase subunit A of Limosilactobacillus reuteri (strain DSM 20016) (Lactobacillus reuteri).